Consider the following 196-residue polypeptide: Putative 3-methyladenine DNA glycosylase (196 aa).

The protein belongs to the DNA glycosylase MPG family.

This chain is Putative 3-methyladenine DNA glycosylase, found in Bacillus licheniformis (strain ATCC 14580 / DSM 13 / JCM 2505 / CCUG 7422 / NBRC 12200 / NCIMB 9375 / NCTC 10341 / NRRL NRS-1264 / Gibson 46).